A 149-amino-acid chain; its full sequence is Thioredoxin-like protein 4B (149 aa).

This sequence belongs to the DIM1 family. In terms of assembly, homodimer. Interacts with the U5-102 kDa protein subunit of the spliceosome.

The protein resides in the nucleus. In terms of biological role, essential role in pre-mRNA splicing. Required in cell cycle progression for S/G(2) transition. In Homo sapiens (Human), this protein is Thioredoxin-like protein 4B (TXNL4B).